We begin with the raw amino-acid sequence, 1378 residues long: DNA-directed RNA polymerase subunit beta (1378 aa).

This sequence belongs to the RNA polymerase beta chain family. In terms of assembly, the RNAP catalytic core consists of 2 alpha, 1 beta, 1 beta' and 1 omega subunit. When a sigma factor is associated with the core the holoenzyme is formed, which can initiate transcription.

The enzyme catalyses RNA(n) + a ribonucleoside 5'-triphosphate = RNA(n+1) + diphosphate. In terms of biological role, DNA-dependent RNA polymerase catalyzes the transcription of DNA into RNA using the four ribonucleoside triphosphates as substrates. In Campylobacter jejuni subsp. jejuni serotype O:23/36 (strain 81-176), this protein is DNA-directed RNA polymerase subunit beta.